The primary structure comprises 418 residues: Tyrosine--tRNA ligase (418 aa).

Tyrosine 34 is a binding site for L-tyrosine. The short motif at 39 to 48 (PTADSLHLGH) is the 'HIGH' region element. Residues tyrosine 169 and glutamine 173 each contribute to the L-tyrosine site. The short motif at 229 to 233 (KFGKS) is the 'KMSKS' region element. Position 232 (lysine 232) interacts with ATP. Residues 352–418 (LNIVDMLVTA…GKKKYAVLTY (67 aa)) enclose the S4 RNA-binding domain.

The protein belongs to the class-I aminoacyl-tRNA synthetase family. TyrS type 1 subfamily. In terms of assembly, homodimer.

The protein resides in the cytoplasm. The enzyme catalyses tRNA(Tyr) + L-tyrosine + ATP = L-tyrosyl-tRNA(Tyr) + AMP + diphosphate + H(+). Catalyzes the attachment of tyrosine to tRNA(Tyr) in a two-step reaction: tyrosine is first activated by ATP to form Tyr-AMP and then transferred to the acceptor end of tRNA(Tyr). This is Tyrosine--tRNA ligase from Streptococcus equi subsp. zooepidemicus (strain MGCS10565).